The chain runs to 283 residues: Elongation factor Ts (283 aa).

The segment at 80–83 (TDFV) is involved in Mg(2+) ion dislocation from EF-Tu.

This sequence belongs to the EF-Ts family.

The protein resides in the cytoplasm. Its function is as follows. Associates with the EF-Tu.GDP complex and induces the exchange of GDP to GTP. It remains bound to the aminoacyl-tRNA.EF-Tu.GTP complex up to the GTP hydrolysis stage on the ribosome. This is Elongation factor Ts from Pectobacterium carotovorum subsp. carotovorum (strain PC1).